Here is a 282-residue protein sequence, read N- to C-terminus: Bacterial lipoprotein FTN_1103 (282 aa).

Residues 1–28 (MKYGNLMMTKKKLLIGMVTISGIVILGS) form the signal peptide. Cysteine 29 is lipidated: N-palmitoyl cysteine. Cysteine 29 is lipidated: S-diacylglycerol cysteine.

Its subcellular location is the cell membrane. In terms of biological role, stimulates the host immune inflammatory signaling system allowing the host to combat the bacteria. Stimulates mouse interleukin-6 (Il6) production. This chain is Bacterial lipoprotein FTN_1103, found in Francisella tularensis subsp. novicida (strain U112).